A 238-amino-acid chain; its full sequence is Peptidyl-tRNA hydrolase (238 aa).

Tyrosine 14 is a binding site for tRNA. Histidine 19 serves as the catalytic Proton acceptor. TRNA contacts are provided by phenylalanine 64, asparagine 66, and asparagine 112. Residues 190-202 show a composition bias toward basic and acidic residues; sequence KTEEPAPKPEKKT. Residues 190-225 form a disordered region; it reads KTEEPAPKPEKKTVAKSHIHQARNHNQPRMPESGPM. Residues 203-212 show a composition bias toward basic residues; that stretch reads VAKSHIHQAR.

This sequence belongs to the PTH family. As to quaternary structure, monomer.

The protein resides in the cytoplasm. It carries out the reaction an N-acyl-L-alpha-aminoacyl-tRNA + H2O = an N-acyl-L-amino acid + a tRNA + H(+). In terms of biological role, hydrolyzes ribosome-free peptidyl-tRNAs (with 1 or more amino acids incorporated), which drop off the ribosome during protein synthesis, or as a result of ribosome stalling. Its function is as follows. Catalyzes the release of premature peptidyl moieties from peptidyl-tRNA molecules trapped in stalled 50S ribosomal subunits, and thus maintains levels of free tRNAs and 50S ribosomes. In Rhizobium rhizogenes (strain K84 / ATCC BAA-868) (Agrobacterium radiobacter), this protein is Peptidyl-tRNA hydrolase.